Reading from the N-terminus, the 441-residue chain is Cysteine proteinase (441 aa).

Cysteine 249 and cysteine 290 are disulfide-bonded. Cysteine 252 is an active-site residue. Residues asparagine 270 and asparagine 345 are each glycosylated (N-linked (GlcNAc...) asparagine). Catalysis depends on residues histidine 381 and asparagine 403.

This sequence belongs to the peptidase C1 family.

This is Cysteine proteinase (TACP) from Theileria annulata.